The primary structure comprises 152 residues: Deoxyuridine 5'-triphosphate nucleotidohydrolase (152 aa).

Residues 71 to 73, Asn84, 88 to 90, and Met98 contribute to the substrate site; these read RSG and LID.

Belongs to the dUTPase family. Requires Mg(2+) as cofactor.

The enzyme catalyses dUTP + H2O = dUMP + diphosphate + H(+). The protein operates within pyrimidine metabolism; dUMP biosynthesis; dUMP from dCTP (dUTP route): step 2/2. Its function is as follows. This enzyme is involved in nucleotide metabolism: it produces dUMP, the immediate precursor of thymidine nucleotides and it decreases the intracellular concentration of dUTP so that uracil cannot be incorporated into DNA. The chain is Deoxyuridine 5'-triphosphate nucleotidohydrolase from Shewanella piezotolerans (strain WP3 / JCM 13877).